The sequence spans 381 residues: Class E basic helix-loop-helix protein 22 (381 aa).

3 disordered regions span residues 30–94 (RLEA…GGGG), 135–154 (RGSV…DSDG), and 188–242 (HLHG…EQKA). The span at 82-94 (GGGGGSAGSGGGG) shows a compositional bias: gly residues. The segment covering 198-225 (GGLGGGGGGGSSSGSSGGGGGSGSGSGG) has biased composition (gly residues). The region spanning 242 to 296 (ALRLNINARERRRMHDLNDALDELRAVIPYAHSPSVRKLSKIATLLLAKNYILMQ) is the bHLH domain.

In terms of assembly, interacts with PRDM8. Brain-specific, with the highest expression in the cerebellum.

It localises to the nucleus. Functionally, inhibits DNA binding of TCF3/E47 homodimers and TCF3 (E47)/NEUROD1 heterodimers and acts as a strong repressor of Neurod1 and Myod-responsive genes, probably by heterodimerization with class a basic helix-loop-helix factors. Despite the presence of an intact basic domain, does not bind to DNA. In the brain, may function as an area-specific transcription factor that regulates the postmitotic acquisition of area identities and elucidate the genetic hierarchy between progenitors and postmitotic neurons driving neocortical arealization. May be required for the survival of a specific population of inhibitory neurons in the superficial laminae of the spinal cord dorsal horn that may regulate pruritis. Seems to play a crucial role in the retinogenesis, in the specification of amacrine and bipolar subtypes. Forms with PRDM8 a transcriptional repressor complex controlling genes involved in neural development and neuronal differentiation. This Homo sapiens (Human) protein is Class E basic helix-loop-helix protein 22 (BHLHE22).